A 282-amino-acid chain; its full sequence is Pyrroline-5-carboxylate reductase (282 aa).

Belongs to the pyrroline-5-carboxylate reductase family.

It catalyses the reaction L-proline + NADP(+) = (S)-1-pyrroline-5-carboxylate + NADPH + 2 H(+). The catalysed reaction is L-proline + NAD(+) = (S)-1-pyrroline-5-carboxylate + NADH + 2 H(+). It participates in amino-acid biosynthesis; L-proline biosynthesis; L-proline from L-glutamate 5-semialdehyde: step 1/1. The sequence is that of Pyrroline-5-carboxylate reductase (pro3) from Schizosaccharomyces pombe (strain 972 / ATCC 24843) (Fission yeast).